Here is a 260-residue protein sequence, read N- to C-terminus: Dehydrogenase/reductase SDR family member 11 (260 aa).

A signal peptide spans methionine 1–alanine 30. NADP(+) is bound by residues glycine 18–isoleucine 23, arginine 43–threonine 44, glutamate 49, aspartate 70–leucine 71, and asparagine 97. Substrate-binding residues include serine 151 and tyrosine 166. NADP(+) is bound by residues tyrosine 166, lysine 170, valine 201–glutamine 204, and lysine 208. The active-site Proton acceptor is tyrosine 166.

Belongs to the short-chain dehydrogenases/reductases (SDR) family. As to quaternary structure, homotetramer. Isoform 1: Ubiquitously expressed, with highest levels in testis, small intestine, colon, kidney, brain and heart. Isoform 3: Expressed in brain, heart and skeletal muscle.

It localises to the secreted. It carries out the reaction a 3beta-hydroxysteroid + NADP(+) = a 3-oxosteroid + NADPH + H(+). The enzyme catalyses 17beta-estradiol + NAD(+) = estrone + NADH + H(+). The catalysed reaction is 17beta-estradiol + NADP(+) = estrone + NADPH + H(+). It functions in the pathway steroid biosynthesis; estrogen biosynthesis. With respect to regulation, inhibited by flavonoids including apigenin, luteolin, genistein, kaempferol and quercetin and also by carbenoxolone, zearalenone, glycyrrhetinic, curcumin and flufenamic acid. In terms of biological role, catalyzes the conversion of the 17-keto group of estrone, 4- and 5-androstenes and 5-alpha-androstanes into their 17-beta-hydroxyl metabolites and the conversion of the 3-keto group of 3-, 3,17- and 3,20- diketosteroids into their 3-hydroxyl metabolites. Exhibits reductive 3-beta-hydroxysteroid dehydrogenase activity toward 5-beta-androstanes, 5-beta-pregnanes, 4-pregnenes and bile acids. May also reduce endogenous and exogenous alpha-dicarbonyl compounds and xenobiotic alicyclic ketones. The polypeptide is Dehydrogenase/reductase SDR family member 11 (DHRS11) (Homo sapiens (Human)).